The primary structure comprises 194 residues: GTP cyclohydrolase-2 (194 aa).

Residue 50–54 (RIHSE) coordinates GTP. The Zn(2+) site is built by C55, C66, and C68. GTP contacts are provided by residues 94 to 96 (EGR) and T116. Residue D128 is the Proton acceptor of the active site. The active-site Nucleophile is R130. Positions 151 and 156 each coordinate GTP.

The protein belongs to the GTP cyclohydrolase II family. Zn(2+) is required as a cofactor.

The catalysed reaction is GTP + 4 H2O = 2,5-diamino-6-hydroxy-4-(5-phosphoribosylamino)-pyrimidine + formate + 2 phosphate + 3 H(+). The protein operates within cofactor biosynthesis; riboflavin biosynthesis; 5-amino-6-(D-ribitylamino)uracil from GTP: step 1/4. Functionally, catalyzes the conversion of GTP to 2,5-diamino-6-ribosylamino-4(3H)-pyrimidinone 5'-phosphate (DARP), formate and pyrophosphate. This is GTP cyclohydrolase-2 from Helicobacter hepaticus (strain ATCC 51449 / 3B1).